We begin with the raw amino-acid sequence, 129 residues long: Phosphoribosyl-AMP cyclohydrolase (129 aa).

Aspartate 85 is a Mg(2+) binding site. Cysteine 86 serves as a coordination point for Zn(2+). Residues aspartate 87 and aspartate 89 each coordinate Mg(2+). Positions 102 and 109 each coordinate Zn(2+).

This sequence belongs to the PRA-CH family. Homodimer. The cofactor is Mg(2+). Requires Zn(2+) as cofactor.

It localises to the cytoplasm. The catalysed reaction is 1-(5-phospho-beta-D-ribosyl)-5'-AMP + H2O = 1-(5-phospho-beta-D-ribosyl)-5-[(5-phospho-beta-D-ribosylamino)methylideneamino]imidazole-4-carboxamide. Its pathway is amino-acid biosynthesis; L-histidine biosynthesis; L-histidine from 5-phospho-alpha-D-ribose 1-diphosphate: step 3/9. In terms of biological role, catalyzes the hydrolysis of the adenine ring of phosphoribosyl-AMP. This chain is Phosphoribosyl-AMP cyclohydrolase, found in Methanococcus maripaludis (strain C6 / ATCC BAA-1332).